The primary structure comprises 292 residues: Lipoyl synthase (292 aa).

Positions 38, 43, 49, 64, 68, 71, and 277 each coordinate [4Fe-4S] cluster. One can recognise a Radical SAM core domain in the interval 50–266 (WSKGTATFLL…REIALDAGFR (217 aa)).

The protein belongs to the radical SAM superfamily. Lipoyl synthase family. It depends on [4Fe-4S] cluster as a cofactor.

The protein resides in the cytoplasm. It carries out the reaction [[Fe-S] cluster scaffold protein carrying a second [4Fe-4S](2+) cluster] + N(6)-octanoyl-L-lysyl-[protein] + 2 oxidized [2Fe-2S]-[ferredoxin] + 2 S-adenosyl-L-methionine + 4 H(+) = [[Fe-S] cluster scaffold protein] + N(6)-[(R)-dihydrolipoyl]-L-lysyl-[protein] + 4 Fe(3+) + 2 hydrogen sulfide + 2 5'-deoxyadenosine + 2 L-methionine + 2 reduced [2Fe-2S]-[ferredoxin]. It functions in the pathway protein modification; protein lipoylation via endogenous pathway; protein N(6)-(lipoyl)lysine from octanoyl-[acyl-carrier-protein]: step 2/2. Its function is as follows. Catalyzes the radical-mediated insertion of two sulfur atoms into the C-6 and C-8 positions of the octanoyl moiety bound to the lipoyl domains of lipoate-dependent enzymes, thereby converting the octanoylated domains into lipoylated derivatives. The polypeptide is Lipoyl synthase (Chlorobaculum parvum (strain DSM 263 / NCIMB 8327) (Chlorobium vibrioforme subsp. thiosulfatophilum)).